Reading from the N-terminus, the 253-residue chain is Sulfate transporter CysZ (253 aa).

The next 4 membrane-spanning stretches (helical) occupy residues 31–51, 75–95, 151–171, and 222–242; these read FVILPLLVNILLMGGAFWWLF, LLWPLAVISVLLVFGYFFSTI, IVLLILYFIPGIGQTVAPVLW, and IPLLNLFIMPVAVCGATAMWV.

Belongs to the CysZ family.

The protein localises to the cell inner membrane. High affinity, high specificity proton-dependent sulfate transporter, which mediates sulfate uptake. Provides the sulfur source for the cysteine synthesis pathway. The sequence is that of Sulfate transporter CysZ from Shigella flexneri.